We begin with the raw amino-acid sequence, 98 residues long: MALSIECQQRPEKVNPRALRREGLIPATLYGHNGAESISLVVDHKTAITMLRSVTVKETPIEVKIPHLSWEGEAVVQEIQCHPWRRNLYHLAFFAGKK.

This sequence belongs to the bacterial ribosomal protein bL25 family. In terms of assembly, part of the 50S ribosomal subunit; part of the 5S rRNA/L5/L18/L25 subcomplex. Contacts the 5S rRNA. Binds to the 5S rRNA independently of L5 and L18.

Functionally, this is one of the proteins that binds to the 5S RNA in the ribosome where it forms part of the central protuberance. This is Large ribosomal subunit protein bL25 from Synechocystis sp. (strain ATCC 27184 / PCC 6803 / Kazusa).